We begin with the raw amino-acid sequence, 428 residues long: Putative zinc finger protein 355P (428 aa).

Positions 1-64 (MRDEVAEKEK…KHPGLTQHNI (64 aa)) constitute a KRAB domain. C2H2-type zinc fingers lie at residues 72-94 (YKCK…QRIH), 100-122 (YKCE…MRAH), and 128-150 (YKCE…KRIH). The segment at 156–178 (YKFEECDKAFYWVLSFTKHMIIH) adopts a C2H2-type 4; degenerate zinc-finger fold. Residues 184–206 (YKYQECGKAFKWSSNLTIHKRIH) form a C2H2-type 5; degenerate zinc finger. The segment at 212–234 (CKCEECGKACKQSLGLTIQKRIH) adopts a C2H2-type 6; degenerate zinc-finger fold. The segment at 263 to 285 (YNCEKCGKAFYCSSNLIQNNIVH) adopts a C2H2-type 7; degenerate zinc-finger fold. C2H2-type zinc fingers lie at residues 291-313 (YKCQ…KIIH) and 335-357 (YKCE…MIVH). Residues 363–385 (YKCEECGKAFKWSSELTIHQRIR) form a C2H2-type 10; degenerate zinc finger. The C2H2-type 11 zinc finger occupies 391 to 413 (YKCEECVRVFKHSSKLNEHKRNH).

It belongs to the krueppel C2H2-type zinc-finger protein family.

Its subcellular location is the nucleus. Its function is as follows. May be involved in transcriptional regulation. The chain is Putative zinc finger protein 355P (ZNF355P) from Homo sapiens (Human).